The chain runs to 522 residues: Zinc finger protein 329 (522 aa).

The residue at position 30 (serine 30) is a Phosphoserine. 12 consecutive C2H2-type zinc fingers follow at residues 184–206 (YKCA…HRTH), 212–234 (YTCN…RRIH), 240–262 (YKCS…QRIH), 268–290 (YACL…QRTH), 296–318 (YRCN…LRIH), 324–346 (YECS…ERTH), 352–374 (FECV…QKIH), 380–402 (YECK…QRVH), 408–430 (YGCN…QRIH), 436–458 (YECN…QRIH), 464–486 (YQCL…QRLH), and 492–514 (SQCP…QRTH).

This sequence belongs to the krueppel C2H2-type zinc-finger protein family.

It localises to the nucleus. In terms of biological role, may be involved in transcriptional regulation. This Mus musculus (Mouse) protein is Zinc finger protein 329 (Znf329).